The chain runs to 117 residues: Large ribosomal subunit protein uL18 (117 aa).

The protein belongs to the universal ribosomal protein uL18 family. In terms of assembly, part of the 50S ribosomal subunit; part of the 5S rRNA/L5/L18/L25 subcomplex. Contacts the 5S and 23S rRNAs.

Functionally, this is one of the proteins that bind and probably mediate the attachment of the 5S RNA into the large ribosomal subunit, where it forms part of the central protuberance. The sequence is that of Large ribosomal subunit protein uL18 from Hydrogenovibrio crunogenus (strain DSM 25203 / XCL-2) (Thiomicrospira crunogena).